A 587-amino-acid polypeptide reads, in one-letter code: MASTNALSSTSILRSPTNQAQTSLSKKVKQHGRVNFRQKPNRFVVKAAAKDIAFDQHSRSAMQAGIDKLADAVGLTLGPRGRNVVLDEFGSPKVVNDGVTIARAIELPDPMENAGAALIREVASKTNDSAGDGTTTASILAREIIKLGLLNVTSGANPVSIKKGIDKTVAALVEELEKLARPVKGGDDIKAVATISAGNDELIGKMIAEAIDKVGPDGVLSIESSNSFETTVEVEEGMEIDRGYISPQFVTNPEKSIVEFENARVLITDQKISAIKDIIPLLEKTTQLRAPLLIISEDITGEALATLVVNKLRGILNVAAIKAPGFGERRKALLQDIAILTGAEFQASDLGLLVENTTIEQLGLARKVTISKDSTTIIADAASKDELQSRVAQLKKELSETDSIYDSEKLAERIAKLSGGVAVIKVGAATETELEDRKLRIEDAKNATFAAIEEGIVPGGGTALVHLSGYVPAIKEKLEDADERLGADIVQKALVAPAALIAQNAGIEGEVVVEKIKNGEWEVGYNAMTDTYENLVESGVIDPAKVTRCALQNAASVAGMVLTTQAIVVEKPKPKAAVAAAPQGLTI.

Over residues 1–25 the composition is skewed to polar residues; sequence MASTNALSSTSILRSPTNQAQTSLS. Residues 1 to 33 form a disordered region; the sequence is MASTNALSSTSILRSPTNQAQTSLSKKVKQHGR. A chloroplast-targeting transit peptide spans 1-47; that stretch reads MASTNALSSTSILRSPTNQAQTSLSKKVKQHGRVNFRQKPNRFVVKA.

It belongs to the chaperonin (HSP60) family. As to quaternary structure, oligomer of probably six alpha and six beta subunits.

The protein localises to the plastid. It is found in the chloroplast. In terms of biological role, this protein binds RuBisCO small and large subunits and is implicated in the assembly of the enzyme oligomer. The polypeptide is RuBisCO large subunit-binding protein subunit alpha, chloroplastic (Pisum sativum (Garden pea)).